Reading from the N-terminus, the 215-residue chain is MKLTVFLRPSRDRPDGVWVASEGPEGDPAGKEAEPAQPVSSLLGSPACGPIRAGLGWVRDGPRSHPYNFPAGSGGSILRSSSTPVQGTVPVDLASRQEEEEQSPDSTEEEPVTLPRRTTNDGFHLLKAGGSCFALISGTANQVKCYRFRVKKNHRHRYENCTTTWFTVADNGAERQGQAQILITFGSPSQRQDFLKHVPLPPGMNISGFTASLDF.

Disordered regions lie at residues 1-45, 68-87, and 94-119; these read MKLT…LLGS, NFPA…PVQG, and ASRQ…RRTT. Residues 98–111 are compositionally biased toward acidic residues; that stretch reads EEEEQSPDSTEEEP.

The protein belongs to the papillomaviridae E8^E2C protein family.

The protein localises to the host nucleus. Its function is as follows. Plays a role in limiting the replication of viral DNA in keratinocytes. Recruits the host NCoR/SMRT complex to viral replication foci to mediate repression of both viral replication and transcription. The chain is Protein E8^E2C from Bovine papillomavirus type 1.